The sequence spans 200 residues: Recombination protein RecR (200 aa).

A C4-type zinc finger spans residues 58-73 (CEVCHNLAEEGLCAIC). The Toprim domain occupies 81–176 (GLICVVEEPV…DISRLAYGMP (96 aa)).

This sequence belongs to the RecR family.

May play a role in DNA repair. It seems to be involved in an RecBC-independent recombinational process of DNA repair. It may act with RecF and RecO. The sequence is that of Recombination protein RecR from Magnetococcus marinus (strain ATCC BAA-1437 / JCM 17883 / MC-1).